We begin with the raw amino-acid sequence, 124 residues long: ATP synthase epsilon chain (124 aa).

It belongs to the ATPase epsilon chain family. As to quaternary structure, F-type ATPases have 2 components, CF(1) - the catalytic core - and CF(0) - the membrane proton channel. CF(1) has five subunits: alpha(3), beta(3), gamma(1), delta(1), epsilon(1). CF(0) has three main subunits: a, b and c.

The protein localises to the cell membrane. In terms of biological role, produces ATP from ADP in the presence of a proton gradient across the membrane. This Streptomyces griseus subsp. griseus (strain JCM 4626 / CBS 651.72 / NBRC 13350 / KCC S-0626 / ISP 5235) protein is ATP synthase epsilon chain.